Consider the following 415-residue polypeptide: Multidrug resistance protein MdtA (415 aa).

Residues 1-21 (MKGSYKSRWVIVIVVVIAAIA) form the signal peptide. Disordered stretches follow at residues 32–56 (SRSAAPGATKQAQQSPAGGRRGMRA) and 392–415 (EAQSATTSEEKATSREYAKKGARS). Basic and acidic residues predominate over residues 399 to 415 (SEEKATSREYAKKGARS).

This sequence belongs to the membrane fusion protein (MFP) (TC 8.A.1) family. As to quaternary structure, part of a tripartite efflux system composed of MdtA, MdtB and MdtC.

The protein resides in the cell inner membrane. In terms of biological role, the MdtABC tripartite complex confers resistance against novobiocin and deoxycholate. The protein is Multidrug resistance protein MdtA of Escherichia coli O7:K1 (strain IAI39 / ExPEC).